Here is a 330-residue protein sequence, read N- to C-terminus: Ribose-phosphate pyrophosphokinase (330 aa).

55–57 serves as a coordination point for ATP; it reads DGE. 2 residues coordinate Mg(2+): His-148 and Asp-187. The active site involves Lys-211. D-ribose 5-phosphate contacts are provided by residues Arg-213, Asp-237, and 241–245; that span reads DTGGT.

The protein belongs to the ribose-phosphate pyrophosphokinase family. Class I subfamily. Homohexamer. The cofactor is Mg(2+).

The protein localises to the cytoplasm. The catalysed reaction is D-ribose 5-phosphate + ATP = 5-phospho-alpha-D-ribose 1-diphosphate + AMP + H(+). It participates in metabolic intermediate biosynthesis; 5-phospho-alpha-D-ribose 1-diphosphate biosynthesis; 5-phospho-alpha-D-ribose 1-diphosphate from D-ribose 5-phosphate (route I): step 1/1. In terms of biological role, involved in the biosynthesis of the central metabolite phospho-alpha-D-ribosyl-1-pyrophosphate (PRPP) via the transfer of pyrophosphoryl group from ATP to 1-hydroxyl of ribose-5-phosphate (Rib-5-P). The sequence is that of Ribose-phosphate pyrophosphokinase from Nostoc sp. (strain PCC 7120 / SAG 25.82 / UTEX 2576).